The primary structure comprises 62 residues: Large ribosomal subunit protein uL29 (62 aa).

It belongs to the universal ribosomal protein uL29 family.

This chain is Large ribosomal subunit protein uL29, found in Geobacter sp. (strain M21).